The chain runs to 1770 residues: Transposon Ty2-OR1 Gag-Pol polyprotein (1770 aa).

Composition is skewed to polar residues over residues 1 to 39 and 49 to 60; these read MESQ…SASN and KVNSQQETTPGT. Disordered regions lie at residues 1–88 and 359–449; these read MESQ…YQQH and QHSE…SNDE. The RNA-binding stretch occupies residues 295–397; it reads ENNINVSDRL…SSKPRAAKAH (103 aa). A compositionally biased stretch (low complexity) spans 369–381; sequence TSPNTTNTKVTTR. 2 stretches are compositionally biased toward polar residues: residues 399–408 and 415–435; these read IATSSKFSRV and ESTV…GQQQ. The active-site For protease activity; shared with dimeric partner is Asp457. Residues 579–636 form an integrase-type zinc finger-like region; the sequence is NVNKSKSVNKYPYPLIHRMLGHANFRSIQKSLKKNAVTYLKESDIEWSNASTYQCPDC. One can recognise an Integrase catalytic domain in the interval 656-831; that stretch reads ESYEPFQYLH…AGLDITTILP (176 aa). Mg(2+) contacts are provided by Asp667 and Asp732. 3 stretches are compositionally biased toward polar residues: residues 916-929, 1009-1024, and 1065-1082; these read FIEQ…YDQN, ESDT…FTAR, and QRNS…STPS. Disordered stretches follow at residues 916–935, 1005–1038, and 1057–1205; these read FIEQ…SDHD, GGTI…MIDL, and GGTE…TEIE. The short motif at 1193-1227 is the Bipartite nuclear localization signal element; sequence KKRSLEDNETEIEVSRDTWNNKNMRSLEPPRSKKR. A Reverse transcriptase Ty1/copia-type domain is found at 1353-1491; the sequence is NDYYITQLDI…DILGLEIKYQ (139 aa). The Mg(2+) site is built by Asp1361, Asp1442, Asp1443, Asp1625, Glu1667, and Asp1700. One can recognise an RNase H Ty1/copia-type domain in the interval 1625-1767; the sequence is DASYGNQPYY…IKTFKLLTNK (143 aa).

The capsid protein forms a homotrimer, from which the VLPs are assembled. The protease is a homodimer, whose active site consists of two apposed aspartic acid residues. Post-translationally, initially, virus-like particles (VLPs) are composed of the structural unprocessed proteins Gag and Gag-Pol, and also contain the host initiator methionine tRNA (tRNA(i)-Met) which serves as a primer for minus-strand DNA synthesis, and a dimer of genomic Ty RNA. Processing of the polyproteins occurs within the particle and proceeds by an ordered pathway, called maturation. First, the protease (PR) is released by autocatalytic cleavage of the Gag-Pol polyprotein, and this cleavage is a prerequisite for subsequent processing at the remaining sites to release the mature structural and catalytic proteins. Maturation takes place prior to the RT reaction and is required to produce transposition-competent VLPs.

Its subcellular location is the cytoplasm. It is found in the nucleus. It catalyses the reaction DNA(n) + a 2'-deoxyribonucleoside 5'-triphosphate = DNA(n+1) + diphosphate. The catalysed reaction is Endonucleolytic cleavage to 5'-phosphomonoester.. Functionally, capsid protein (CA) is the structural component of the virus-like particle (VLP), forming the shell that encapsulates the retrotransposons dimeric RNA genome. The particles are assembled from trimer-clustered units and there are holes in the capsid shells that allow for the diffusion of macromolecules. CA also has nucleocapsid-like chaperone activity, promoting primer tRNA(i)-Met annealing to the multipartite primer-binding site (PBS), dimerization of Ty2 RNA and initiation of reverse transcription. The aspartyl protease (PR) mediates the proteolytic cleavages of the Gag and Gag-Pol polyproteins after assembly of the VLP. Its function is as follows. Reverse transcriptase/ribonuclease H (RT) is a multifunctional enzyme that catalyzes the conversion of the retro-elements RNA genome into dsDNA within the VLP. The enzyme displays a DNA polymerase activity that can copy either DNA or RNA templates, and a ribonuclease H (RNase H) activity that cleaves the RNA strand of RNA-DNA heteroduplexes during plus-strand synthesis and hydrolyzes RNA primers. The conversion leads to a linear dsDNA copy of the retrotransposon that includes long terminal repeats (LTRs) at both ends. In terms of biological role, integrase (IN) targets the VLP to the nucleus, where a subparticle preintegration complex (PIC) containing at least integrase and the newly synthesized dsDNA copy of the retrotransposon must transit the nuclear membrane. Once in the nucleus, integrase performs the integration of the dsDNA into the host genome. The chain is Transposon Ty2-OR1 Gag-Pol polyprotein (TY2B-OR1) from Saccharomyces cerevisiae (strain ATCC 204508 / S288c) (Baker's yeast).